The sequence spans 432 residues: Probable M18 family aminopeptidase 2 (432 aa).

Residues H86, H157, and H408 each coordinate Zn(2+).

It belongs to the peptidase M18 family. The cofactor is Zn(2+).

The sequence is that of Probable M18 family aminopeptidase 2 (apeB) from Streptomyces coelicolor (strain ATCC BAA-471 / A3(2) / M145).